The primary structure comprises 334 residues: Tryptophan--tRNA ligase (334 aa).

Residues Gln-11–Ser-13 and Gly-19–Asn-20 each bind ATP. The short motif at Pro-12–Asn-20 is the 'HIGH' region element. Residue Asp-135 participates in L-tryptophan binding. ATP contacts are provided by residues Gly-147–Asp-149, Ile-186, and Lys-195–Ser-199. Positions Lys-195–Ser-199 match the 'KMSKS' region motif.

The protein belongs to the class-I aminoacyl-tRNA synthetase family. In terms of assembly, homodimer.

It is found in the cytoplasm. It carries out the reaction tRNA(Trp) + L-tryptophan + ATP = L-tryptophyl-tRNA(Trp) + AMP + diphosphate + H(+). Functionally, catalyzes the attachment of tryptophan to tRNA(Trp). This chain is Tryptophan--tRNA ligase, found in Haemophilus influenzae (strain ATCC 51907 / DSM 11121 / KW20 / Rd).